A 290-amino-acid chain; its full sequence is Probable proteasome subunit beta type-6 (290 aa).

This sequence belongs to the peptidase T1B family. As to quaternary structure, the 26S proteasome consists of a 20S proteasome core and two 19S regulatory subunits. The 20S proteasome core is composed of 28 subunits that are arranged in four stacked rings, resulting in a barrel-shaped structure. The two end rings are each formed by seven alpha subunits, and the two central rings are each formed by seven beta subunits. The catalytic chamber with the active sites is on the inside of the barrel.

It is found in the cytoplasm. It localises to the nucleus. In terms of biological role, non-catalytic component of the proteasome which degrades poly-ubiquitinated proteins in the cytoplasm and in the nucleus. It is essential for the regulated turnover of proteins and for the removal of misfolded proteins. The proteasome is a multicatalytic proteinase complex that is characterized by its ability to cleave peptides with Arg, Phe, Tyr, Leu, and Glu adjacent to the leaving group at neutral or slightly basic pH. It has an ATP-dependent proteolytic activity. In Encephalitozoon cuniculi (strain GB-M1) (Microsporidian parasite), this protein is Probable proteasome subunit beta type-6 (PRE7).